The following is a 49-amino-acid chain: Large ribosomal subunit protein bL33A (49 aa).

It belongs to the bacterial ribosomal protein bL33 family.

The chain is Large ribosomal subunit protein bL33A from Mycoplasmopsis agalactiae (strain NCTC 10123 / CIP 59.7 / PG2) (Mycoplasma agalactiae).